Here is a 220-residue protein sequence, read N- to C-terminus: uncharacterized protein (220 aa).

A helical membrane pass occupies residues Phe20–Ile42.

The protein resides in the membrane. This is an uncharacterized protein from Rickettsia prowazekii (strain Madrid E).